Here is a 488-residue protein sequence, read N- to C-terminus: Glutamyl-tRNA(Gln) amidotransferase subunit B, mitochondrial (488 aa).

This sequence belongs to the GatB/GatE family. GatB subfamily. As to quaternary structure, subunit of the heterotrimeric GatFAB amidotransferase (AdT) complex, composed of A, B and F subunits.

Its subcellular location is the mitochondrion. It catalyses the reaction L-glutamyl-tRNA(Gln) + L-glutamine + ATP + H2O = L-glutaminyl-tRNA(Gln) + L-glutamate + ADP + phosphate + H(+). Allows the formation of correctly charged Gln-tRNA(Gln) through the transamidation of misacylated Glu-tRNA(Gln) in the mitochondria. The reaction takes place in the presence of glutamine and ATP through an activated gamma-phospho-Glu-tRNA(Gln). The polypeptide is Glutamyl-tRNA(Gln) amidotransferase subunit B, mitochondrial (Candida albicans (strain SC5314 / ATCC MYA-2876) (Yeast)).